The primary structure comprises 1043 residues: Glutamate receptor ionotropic, NMDA 3B (1043 aa).

The signal sequence occupies residues Met-1–Gly-22. At His-23–His-574 the chain is on the extracellular side. 4 N-linked (GlcNAc...) asparagine glycosylation sites follow: Asn-69, Asn-344, Asn-451, and Asn-465. Cystine bridges form between Cys-439–Cys-475 and Cys-445–Cys-476. The glycine site is built by Ser-531, Ser-533, and Arg-538. 2 residues coordinate D-serine: Ser-533 and Arg-538. A helical transmembrane segment spans residues Trp-575–Val-594. At Tyr-595–Ser-615 the chain is on the cytoplasmic side. An intramembrane region (discontinuously helical) is located at residues Tyr-616 to Leu-627. At Phe-628–Thr-641 the chain is on the cytoplasmic side. Residues Gly-642–Thr-661 form a helical membrane-spanning segment. Residues Ala-662–Ala-832 lie on the Extracellular side of the membrane. Ser-701 is a glycine binding site. D-serine-binding residues include Ser-701, Ala-702, and Asp-745. Asp-745 contacts glycine. Asn-786 carries an N-linked (GlcNAc...) asparagine glycan. Residues Gly-833–Ser-848 traverse the membrane as a helical segment. At Ser-849 to Glu-1043 the chain is on the cytoplasmic side. Disordered regions lie at residues Ala-882–Ala-924 and Gly-1012–Glu-1043. The interval Gln-979 to Gly-1012 is involved in the trafficking and surface expression of NMDARs. Residues Gln-1024–His-1035 are compositionally biased toward low complexity.

This sequence belongs to the glutamate-gated ion channel (TC 1.A.10.1) family. NR3B/GRIN3B subfamily. In terms of assembly, forms heterotetrameric channels that contain at least two GluN1 subunits and at least a combination of one GluN2 and one GluN3 subunits (in vitro). Forms heterotetrameric channels composed of two GluN1/zeta subunits (GRIN1), and two identical GluN3 subunits (GRIN3A or GRIN3B) (in vitro). Does not form functional homomeric channels.

It is found in the cell membrane. Its subcellular location is the postsynaptic cell membrane. The catalysed reaction is Ca(2+)(in) = Ca(2+)(out). It catalyses the reaction Na(+)(in) = Na(+)(out). Functionally, component of a non-conventional N-methyl-D-aspartate (NMDA) receptors (NMDARs) that function as heterotetrameric, ligand-gated cation channels with low calcium permeability and low voltage-dependent block by Mg(2+). Forms glutamatergic receptor complexes with GluN1 and GluN2 subunits which are activated by glycine binding to the GluN1 and GluN3 subunits and L-glutamate binding to GluN2 subunits. Forms excitatory glycinergic receptor complexes with GluN1 alone which are activated by glycine binding to the GluN1 and GluN3 subunits. GluN3B subunit also binds D-serine and, in the absence of glycine, activates glycinergic receptor complexes, but with lower efficacy than glycine. Each GluN3 subunit confers differential attributes to channel properties, including activation, deactivation and desensitization kinetics, pH sensitivity, Ca2(+) permeability, and binding to allosteric modulators. In Homo sapiens (Human), this protein is Glutamate receptor ionotropic, NMDA 3B.